A 783-amino-acid chain; its full sequence is DNA ligase (783 aa).

NAD(+) contacts are provided by residues 42-46 (DAEYD), 91-92 (SL), and glutamate 125. The N6-AMP-lysine intermediate role is filled by lysine 127. NAD(+)-binding residues include arginine 148, glutamate 185, lysine 302, and lysine 326. Zn(2+) is bound by residues cysteine 421, cysteine 423, cysteine 445, and cysteine 451. Residues 705–783 (KTDTAVAGKT…EDEWLELVAG (79 aa)) form the BRCT domain.

Belongs to the NAD-dependent DNA ligase family. LigA subfamily. It depends on Mg(2+) as a cofactor. The cofactor is Mn(2+).

The catalysed reaction is NAD(+) + (deoxyribonucleotide)n-3'-hydroxyl + 5'-phospho-(deoxyribonucleotide)m = (deoxyribonucleotide)n+m + AMP + beta-nicotinamide D-nucleotide.. Its function is as follows. DNA ligase that catalyzes the formation of phosphodiester linkages between 5'-phosphoryl and 3'-hydroxyl groups in double-stranded DNA using NAD as a coenzyme and as the energy source for the reaction. It is essential for DNA replication and repair of damaged DNA. The chain is DNA ligase from Caulobacter vibrioides (strain ATCC 19089 / CIP 103742 / CB 15) (Caulobacter crescentus).